The following is a 51-amino-acid chain: Large ribosomal subunit protein bL33 (51 aa).

The protein belongs to the bacterial ribosomal protein bL33 family.

This Pseudoalteromonas translucida (strain TAC 125) protein is Large ribosomal subunit protein bL33.